The following is a 348-amino-acid chain: tRNA pseudouridine synthase D (348 aa).

The Nucleophile role is filled by aspartate 81. A TRUD domain is found at 158 to 304 (GVPNYFGAQR…MRHERRSIEL (147 aa)).

It belongs to the pseudouridine synthase TruD family.

It carries out the reaction uridine(13) in tRNA = pseudouridine(13) in tRNA. Its function is as follows. Responsible for synthesis of pseudouridine from uracil-13 in transfer RNAs. This Aliivibrio salmonicida (strain LFI1238) (Vibrio salmonicida (strain LFI1238)) protein is tRNA pseudouridine synthase D.